The sequence spans 197 residues: Fucoxanthin-chlorophyll a-c binding protein E, chloroplastic (197 aa).

The transit peptide at Met1 to Met31 directs the protein to the chloroplast. A run of 3 helical transmembrane segments spans residues Ile73–Ile94, Ile114–Met134, and Gly174–Pro196.

It belongs to the fucoxanthin chlorophyll protein family. In terms of assembly, the LHC complex of chromophytic algae is composed of fucoxanthin, chlorophyll A and C bound non-covalently by fucoxanthin chlorophyll proteins (FCPs). The ratio of the pigments in LHC; fucoxanthin: chlorophyll C: chlorophyll A; (0.6-1): (0.1-0.3): (1).

Its subcellular location is the plastid. It is found in the chloroplast thylakoid membrane. Functionally, the light-harvesting complex (LHC) functions as a light receptor, it captures and delivers excitation energy to photosystems with which it is closely associated. Energy is transferred from the carotenoid and chlorophyll C (or B) to chlorophyll A and the photosynthetic reaction centers where it is used to synthesize ATP and reducing power. This is Fucoxanthin-chlorophyll a-c binding protein E, chloroplastic (FCPE) from Phaeodactylum tricornutum (Diatom).